The following is a 662-amino-acid chain: UvrABC system protein B (662 aa).

One can recognise a Helicase ATP-binding domain in the interval 25-411 (DGIIAGDKFQ…STRIVEQVIR (387 aa)). 38 to 45 (GVTGSGKT) provides a ligand contact to ATP. A Beta-hairpin motif is present at residues 91–114 (YYDYYQPEAYVPARDLYIEKDASI). One can recognise a Helicase C-terminal domain in the interval 428 to 594 (QMEHIYGEVK…TIKKAIEDIL (167 aa)). The UVR domain maps to 625-660 (KKLIKKLEAQMAEYADMLMFEEAAVIRDKIEEVKRI).

This sequence belongs to the UvrB family. In terms of assembly, forms a heterotetramer with UvrA during the search for lesions. Interacts with UvrC in an incision complex.

It is found in the cytoplasm. Its function is as follows. The UvrABC repair system catalyzes the recognition and processing of DNA lesions. A damage recognition complex composed of 2 UvrA and 2 UvrB subunits scans DNA for abnormalities. Upon binding of the UvrA(2)B(2) complex to a putative damaged site, the DNA wraps around one UvrB monomer. DNA wrap is dependent on ATP binding by UvrB and probably causes local melting of the DNA helix, facilitating insertion of UvrB beta-hairpin between the DNA strands. Then UvrB probes one DNA strand for the presence of a lesion. If a lesion is found the UvrA subunits dissociate and the UvrB-DNA preincision complex is formed. This complex is subsequently bound by UvrC and the second UvrB is released. If no lesion is found, the DNA wraps around the other UvrB subunit that will check the other stand for damage. The polypeptide is UvrABC system protein B (Treponema denticola (strain ATCC 35405 / DSM 14222 / CIP 103919 / JCM 8153 / KCTC 15104)).